A 350-amino-acid polypeptide reads, in one-letter code: tRNA uridine(34) hydroxylase (350 aa).

The 94-residue stretch at 128–221 folds into the Rhodanese domain; that stretch reads EETDYVMIDT…YMKEYPNDQF (94 aa). Residue Cys-181 is the Cysteine persulfide intermediate of the active site.

Belongs to the TrhO family.

The enzyme catalyses uridine(34) in tRNA + AH2 + O2 = 5-hydroxyuridine(34) in tRNA + A + H2O. In terms of biological role, catalyzes oxygen-dependent 5-hydroxyuridine (ho5U) modification at position 34 in tRNAs. The chain is tRNA uridine(34) hydroxylase from Bdellovibrio bacteriovorus (strain ATCC 15356 / DSM 50701 / NCIMB 9529 / HD100).